A 1866-amino-acid polypeptide reads, in one-letter code: Nucleoporin Nup188 (1866 aa).

This sequence belongs to the Nup188 family. Part of the nuclear pore complex (NPC).

The protein localises to the nucleus. It localises to the nuclear pore complex. Functionally, component of the nuclear pore complex (NPC), a complex required for the trafficking across the nuclear envelope. Required for proper protein transport into the nucleus. The polypeptide is Nucleoporin Nup188 (Drosophila melanogaster (Fruit fly)).